We begin with the raw amino-acid sequence, 488 residues long: MTFNNKTIEELHNLLVSKEISATELTQATLENIKSREEALNSFVTIAEEQALVQAKAIDEAGIDADNVLSGIPLAVKDNISTDGILTTAASKMLYNYEPIFDATAVANAKTKGMIVVGKTNMDEFAMGGSGETSHYGATKNAWDHSKVPGGSSSGSAAAVASGQVRLSLGSDTGGSIRQPAAFNGIVGLKPTYGTVSRFGLIAFGSSLDQIGPFAPTVKENALLLNAIASEDAKDSTSAPVRIADFTSKIGQDIKGMKIALPKEYLGEGINPEVKETILNAAKHFEKLGAIVEEVSLPHSKYGVAVYYIIASSEASSNLQRFDGIRYGYRAEDATNLDEIYVNSRSQGFGEEVKRRIMLGTFSLSSGYYDAYYKKAGQVRTLIIQDFEKVFADYDLILGPTAPSVAYDLDSLNHDPVAMYLADLLTIPVNLAGLPGISIPAGFSQGLPVGLQLIGPKYSEETIYQAAAAFEATTDYHKQQPVIFGGDN.

Active-site charge relay system residues include lysine 77 and serine 152. Serine 176 acts as the Acyl-ester intermediate in catalysis.

It belongs to the amidase family. GatA subfamily. In terms of assembly, heterotrimer of A, B and C subunits.

The enzyme catalyses L-glutamyl-tRNA(Gln) + L-glutamine + ATP + H2O = L-glutaminyl-tRNA(Gln) + L-glutamate + ADP + phosphate + H(+). In terms of biological role, allows the formation of correctly charged Gln-tRNA(Gln) through the transamidation of misacylated Glu-tRNA(Gln) in organisms which lack glutaminyl-tRNA synthetase. The reaction takes place in the presence of glutamine and ATP through an activated gamma-phospho-Glu-tRNA(Gln). This is Glutamyl-tRNA(Gln) amidotransferase subunit A from Streptococcus pneumoniae serotype 19F (strain G54).